Here is a 472-residue protein sequence, read N- to C-terminus: Peptidoglycan endopeptidase RipA (472 aa).

The tat-type signal signal peptide spans 1-39 (MRRNRRGSPARPAARFVRPAIPSALSVALLVCTPGLATA). The region spanning 340–472 (RQASEYVIRR…TPYVVRYIEY (133 aa)) is the NlpC/P60 domain. The Nucleophile role is filled by Cys383. His432 functions as the Proton acceptor in the catalytic mechanism. Glu444 is an active-site residue.

It belongs to the peptidase C40 family. As to quaternary structure, monomer. Interacts with RpfB and PBP1A (ponA1) via residues 448-472 of RipA, interacts with RpfE. Interacts with the chaperone MoxR1. RipA-MoxR1 interaction in the cytoplasm leads to proper folding of RipA, resulting in its secretion. Also interacts with Mce2B. Exported by the Tat system. The position of the signal peptide cleavage has not been experimentally proven.

The protein resides in the secreted. Its activity is regulated as follows. MoxR1-mediated folding is critical for secretion via the TAT system. The synergistic effects on peptidoglycan degradation of RipA plus RpfB are inhibited by addition of PBP1A (ponA1). Functionally, peptidoglycan endopeptidase that cleaves the bond between D-glutamate and meso-diaminopimelate. Binds and degrades high-molecular weight peptidoglycan from a number of Actinobacteria; activity is increased in the presence of RpfB and inhibited by PBP1A (ponA1). Required for normal separation of daughter cells after cell division and for cell wall integrity. Required for host cell invasion and intracellular survival in host macrophages. This is Peptidoglycan endopeptidase RipA (ripA) from Mycobacterium tuberculosis (strain ATCC 25618 / H37Rv).